Here is a 118-residue protein sequence, read N- to C-terminus: Large ribosomal subunit protein uL22 (118 aa).

Belongs to the universal ribosomal protein uL22 family. As to quaternary structure, part of the 50S ribosomal subunit.

In terms of biological role, this protein binds specifically to 23S rRNA; its binding is stimulated by other ribosomal proteins, e.g. L4, L17, and L20. It is important during the early stages of 50S assembly. It makes multiple contacts with different domains of the 23S rRNA in the assembled 50S subunit and ribosome. Functionally, the globular domain of the protein is located near the polypeptide exit tunnel on the outside of the subunit, while an extended beta-hairpin is found that lines the wall of the exit tunnel in the center of the 70S ribosome. The sequence is that of Large ribosomal subunit protein uL22 from Chlorobium limicola (strain DSM 245 / NBRC 103803 / 6330).